The primary structure comprises 72 residues: UPF0352 protein SO_2176 (72 aa).

Belongs to the UPF0352 family.

The chain is UPF0352 protein SO_2176 from Shewanella oneidensis (strain ATCC 700550 / JCM 31522 / CIP 106686 / LMG 19005 / NCIMB 14063 / MR-1).